Here is a 132-residue protein sequence, read N- to C-terminus: ATP synthase epsilon chain (132 aa).

Belongs to the ATPase epsilon chain family. F-type ATPases have 2 components, CF(1) - the catalytic core - and CF(0) - the membrane proton channel. CF(1) has five subunits: alpha(3), beta(3), gamma(1), delta(1), epsilon(1). CF(0) has three main subunits: a, b and c.

It localises to the cell membrane. In terms of biological role, produces ATP from ADP in the presence of a proton gradient across the membrane. This Bacillus caldotenax protein is ATP synthase epsilon chain (atpC).